Consider the following 245-residue polypeptide: 2,3-bisphosphoglycerate-dependent phosphoglycerate mutase (245 aa).

Substrate is bound by residues 8–15 (RHGQSLWN), 21–22 (TG), Arg-60, 87–90 (ERHY), Lys-98, 114–115 (RR), and 183–184 (GN). Residue His-9 is the Tele-phosphohistidine intermediate of the active site. Glu-87 functions as the Proton donor/acceptor in the catalytic mechanism.

The protein belongs to the phosphoglycerate mutase family. BPG-dependent PGAM subfamily.

It carries out the reaction (2R)-2-phosphoglycerate = (2R)-3-phosphoglycerate. It functions in the pathway carbohydrate degradation; glycolysis; pyruvate from D-glyceraldehyde 3-phosphate: step 3/5. Functionally, catalyzes the interconversion of 2-phosphoglycerate and 3-phosphoglycerate. This Bacillus cytotoxicus (strain DSM 22905 / CIP 110041 / 391-98 / NVH 391-98) protein is 2,3-bisphosphoglycerate-dependent phosphoglycerate mutase.